Here is a 228-residue protein sequence, read N- to C-terminus: Core-capsid bridging protein (228 aa).

The tract at residues 146 to 177 is disordered; sequence ARPPAARISPPRRRRRRRRSPRPRATAAYRSS. The segment covering 155-167 has biased composition (basic residues); that stretch reads PPRRRRRRRRSPR. Positions 168–177 are enriched in low complexity; it reads PRATAAYRSS.

The protein belongs to the adenoviridae core-capsid bridging protein family. In terms of assembly, monomer. Homodimer. Exists in equilibrium between monomers and dimers in solution. Interacts with the histone-like nucleoprotein; this interactions bridge the virus core to the capsid. Interacts with core protein X; this interactions bridge the virus core to the capsid. Interacts with the endosome lysis protein VI; this interactions bridge the virus core to the capsid. Interacts with the peripentonal hexons. Interacts with host NPM1; this interaction might play a role in virus assembly.

The protein resides in the virion. The protein localises to the host nucleus. It is found in the host nucleolus. In terms of biological role, associates loosely with the viral DNA to form an outer shell around the nucleoprotein-DNA complex and links it with the capsid by binding the endosome lysis protein. Dissociates from the viral genome during entry. Might be involved in nuclear capsid assembly of the viral particles through its association with NPM1/nucleophosmin. In Murine adenovirus A serotype 1 (MAdV-1), this protein is Core-capsid bridging protein.